Consider the following 463-residue polypeptide: Bifunctional protein HldE (463 aa).

The tract at residues 1–315 is ribokinase; the sequence is MKKILVIGDL…LILNQTHPKI (315 aa). 191 to 194 is an ATP binding site; that stretch reads NRAE. The active site involves Asp-260. The cytidylyltransferase stretch occupies residues 334–463; sequence FTNGCFDLLH…IEKIKRTHND (130 aa).

This sequence in the N-terminal section; belongs to the carbohydrate kinase PfkB family. The protein in the C-terminal section; belongs to the cytidylyltransferase family. As to quaternary structure, homodimer.

The enzyme catalyses D-glycero-beta-D-manno-heptose 7-phosphate + ATP = D-glycero-beta-D-manno-heptose 1,7-bisphosphate + ADP + H(+). It carries out the reaction D-glycero-beta-D-manno-heptose 1-phosphate + ATP + H(+) = ADP-D-glycero-beta-D-manno-heptose + diphosphate. Its pathway is nucleotide-sugar biosynthesis; ADP-L-glycero-beta-D-manno-heptose biosynthesis; ADP-L-glycero-beta-D-manno-heptose from D-glycero-beta-D-manno-heptose 7-phosphate: step 1/4. The protein operates within nucleotide-sugar biosynthesis; ADP-L-glycero-beta-D-manno-heptose biosynthesis; ADP-L-glycero-beta-D-manno-heptose from D-glycero-beta-D-manno-heptose 7-phosphate: step 3/4. Functionally, catalyzes the phosphorylation of D-glycero-D-manno-heptose 7-phosphate at the C-1 position to selectively form D-glycero-beta-D-manno-heptose-1,7-bisphosphate. In terms of biological role, catalyzes the ADP transfer from ATP to D-glycero-beta-D-manno-heptose 1-phosphate, yielding ADP-D-glycero-beta-D-manno-heptose. The sequence is that of Bifunctional protein HldE from Helicobacter pylori (strain HPAG1).